A 102-amino-acid polypeptide reads, in one-letter code: Small ribosomal subunit protein eS24 (102 aa).

The protein belongs to the eukaryotic ribosomal protein eS24 family.

This Methanococcus maripaludis (strain DSM 14266 / JCM 13030 / NBRC 101832 / S2 / LL) protein is Small ribosomal subunit protein eS24.